The sequence spans 563 residues: Nicalin (563 aa).

A signal peptide spans 1–29 (MQDEIIDFFRSPALLFYMTLMLTICVVNG). The Lumenal segment spans residues 30 to 522 (SQQVGEVVET…NRLVAERVKP (493 aa)). N-linked (GlcNAc...) asparagine glycosylation occurs at Asn232. A helical transmembrane segment spans residues 523-543 (AVFELVIAAGVFTYLSAFYYI). Residues 544 to 563 (ATHSQNTIEGTVAAIRKSIF) lie on the Cytoplasmic side of the membrane.

This sequence belongs to the nicastrin family. As to quaternary structure, may interact with the levamisole-sensitive nicotinic acetylcholine receptor (L-AChR). May interact with nra-4 in the ER. Expressed in body wall, pharyngeal, and vulval muscles, excretory canal cell, head and motor neurons, and vulval epithelium.

The protein resides in the endoplasmic reticulum membrane. In terms of biological role, involved in the recognition and selection of protein complexes to exit the endoplasmic reticulum (ER). In muscles, regulates levamisole-sensitive nicotinic acetylcholine receptor (L-AChR) subunit composition, possibly by allowing only specific L-AChR subunit combinations to exit the ER. Specifically, may promote the inclusion of alpha subunits unc-38 and unc-29 into L-AChR. Regulates L-AChR sensitivity to agonists such as nicotine and levamisole at neuro-muscular junctions. In touch neurons, may prevent ER exit of incorrectly folded mec-4-mec-10 ion channel. The sequence is that of Nicalin from Caenorhabditis elegans.